Reading from the N-terminus, the 156-residue chain is MRCPFCGNVDTQVKDSRPAEDHVAIRRRRFCPACAGRFTTYERVQLRDLVVIKSNGKREDFDRTKLERSIRMALQKRPIEPERVDQMISGMVRRLESLGETDVQSKVIGEIVMERLAAIDTVAYVRFASVYKNFQATGDFEDFLSELRPPAPTTDT.

A zinc finger lies at 3 to 34 (CPFCGNVDTQVKDSRPAEDHVAIRRRRFCPAC). In terms of domain architecture, ATP-cone spans 49–139 (LVVIKSNGKR…VYKNFQATGD (91 aa)).

Belongs to the NrdR family. Zn(2+) serves as cofactor.

Negatively regulates transcription of bacterial ribonucleotide reductase nrd genes and operons by binding to NrdR-boxes. This is Transcriptional repressor NrdR from Jannaschia sp. (strain CCS1).